Here is a 463-residue protein sequence, read N- to C-terminus: Cytochrome P450 4d8 (463 aa).

Heme-binding residues include Glu267 and Cys409.

Belongs to the cytochrome P450 family. The cofactor is heme.

It localises to the endoplasmic reticulum membrane. The protein resides in the microsome membrane. May be involved in the metabolism of insect hormones and in the breakdown of synthetic insecticides. The protein is Cytochrome P450 4d8 (Cyp4d8) of Drosophila melanogaster (Fruit fly).